The sequence spans 315 residues: tRNA uridine(34) hydroxylase (315 aa).

The Rhodanese domain occupies 145 to 235; sequence MKNDFILVDM…GIIEYVNFIK (91 aa). Residue C199 is the Cysteine persulfide intermediate of the active site.

This sequence belongs to the TrhO family.

The catalysed reaction is uridine(34) in tRNA + AH2 + O2 = 5-hydroxyuridine(34) in tRNA + A + H2O. Functionally, catalyzes oxygen-dependent 5-hydroxyuridine (ho5U) modification at position 34 in tRNAs. This Wigglesworthia glossinidia brevipalpis protein is tRNA uridine(34) hydroxylase.